A 108-amino-acid chain; its full sequence is Replication restart protein PriB (108 aa).

In terms of domain architecture, SSB spans 8–108 (IDNSFSVMGV…LHAEQIEFID (101 aa)).

Belongs to the PriB family. In terms of assembly, homodimer. Interacts with PriA and DnaT. Component of the replication restart primosome. Primosome assembly occurs via a 'hand-off' mechanism. PriA binds to replication forks, subsequently PriB then DnaT bind; DnaT then displaces ssDNA to generate the helicase loading substrate.

Involved in the restart of stalled replication forks, which reloads the replicative helicase on sites other than the origin of replication; the PriA-PriB pathway is the major replication restart pathway. During primosome assembly it facilitates complex formation between PriA and DnaT on DNA; stabilizes PriA on DNA. Stimulates the DNA unwinding activity of PriA helicase. This is Replication restart protein PriB from Haemophilus influenzae (strain ATCC 51907 / DSM 11121 / KW20 / Rd).